The primary structure comprises 486 residues: Transcription factor bHLH49 (486 aa).

Positions 1–17 are enriched in basic and acidic residues; that stretch reads MDLSAKDEFSAEKRNPD. Disordered stretches follow at residues 1-30 and 194-300; these read MDLS…GDWR and KEST…KDGY. 2 stretches are compositionally biased toward polar residues: residues 198–221 and 243–254; these read VRSS…TQSS and QKNSEAAQSHRS. The span at 273-293 shows a compositional bias: low complexity; sequence QSPNSPGKKSNSGKQQGKQSS. Residues 309 to 359 enclose the bHLH domain; sequence QATNSHSLAERVRREKISERMKFLQDLVPGCNKVTGKAVMLDEIINYVQSL.

As to quaternary structure, homodimer. Interacts with IBH1. As to expression, expressed constitutively in roots, stems, and flowers.

The protein localises to the nucleus. Its function is as follows. Transcriptional activator involved in cell elongation. Regulates the expression of a subset of genes involved in cell expansion by binding to the G-box motif. In Arabidopsis thaliana (Mouse-ear cress), this protein is Transcription factor bHLH49 (BHLH49).